A 121-amino-acid polypeptide reads, in one-letter code: Histone H2B.6 (121 aa).

Positions 1–28 (MAPKAEKKPKVEKRVPGKEGETSKKKAK) are disordered. 2 positions are modified to N6-acetyllysine: lysine 7 and lysine 13.

Belongs to the histone H2B family. In terms of assembly, the nucleosome is a histone octamer containing two molecules each of H2A, H2B, H3 and H4 assembled in one H3-H4 heterotetramer and two H2A-H2B heterodimers. The octamer wraps approximately 147 bp of DNA. In terms of processing, can be acetylated to form H2BK6ac and H2BK33ac. In terms of tissue distribution, expressed preferentially in meristematic tissues.

It is found in the nucleus. It localises to the chromosome. Its function is as follows. Core component of nucleosome. Nucleosomes wrap and compact DNA into chromatin, limiting DNA accessibility to the cellular machineries which require DNA as a template. Histones thereby play a central role in transcription regulation, DNA repair, DNA replication and chromosomal stability. DNA accessibility is regulated via a complex set of post-translational modifications of histones, also called histone code, and nucleosome remodeling. This is Histone H2B.6 (TH123) from Triticum aestivum (Wheat).